A 350-amino-acid chain; its full sequence is MRILVTGGAGFIGSALVRYLVSINAEVLNVDKLTYAGNLASLKPVEGLRNYRFLRADICDRVAINEAFETFQPDYVIHLAAESHVDRSITGADDFVQTNVNGTFTMLETARQYWSNLSQNRKAFFKMLHVSTDEVYGSLGDRGQFEEVSPYDPSSPYSASKAASDHFATAWQRTYGLPVVISNCSNNYGPFHFPEKLIPLMILNALDRKPLPVYGTGSNIRDWLYVDDHARALWLIVREGRPGEKYNVGGRNELRNIDVVNRICLLLDELSPNASHYGDLITFVKDRPGHDARYAIDATKLETELGWKAQENFDTGIRKTVEWYLENGWWWQPLRDKVYSGERLGLLEKA.

7-13 (GGAGFIG) lines the NAD(+) pocket. Thr-132 contributes to the substrate binding site. The active-site Proton donor is Asp-133. Catalysis depends on proton acceptor residues Glu-134 and Tyr-157.

This sequence belongs to the NAD(P)-dependent epimerase/dehydratase family. dTDP-glucose dehydratase subfamily. It depends on NAD(+) as a cofactor.

The enzyme catalyses dTDP-alpha-D-glucose = dTDP-4-dehydro-6-deoxy-alpha-D-glucose + H2O. It functions in the pathway carbohydrate biosynthesis; dTDP-L-rhamnose biosynthesis. This chain is Probable dTDP-glucose 4,6-dehydratase, found in Sinorhizobium fredii (strain NBRC 101917 / NGR234).